Reading from the N-terminus, the 202-residue chain is 7-cyano-7-deazaguanine synthase 1 (202 aa).

7–17 contributes to the ATP binding site; that stretch reads MSGGLDSSSAA. Zn(2+) is bound by residues C166, C174, C177, and C180.

It belongs to the QueC family. Zn(2+) is required as a cofactor.

It catalyses the reaction 7-carboxy-7-deazaguanine + NH4(+) + ATP = 7-cyano-7-deazaguanine + ADP + phosphate + H2O + H(+). It participates in purine metabolism; 7-cyano-7-deazaguanine biosynthesis. In terms of biological role, catalyzes the ATP-dependent conversion of 7-carboxy-7-deazaguanine (CDG) to 7-cyano-7-deazaguanine (preQ(0)). The protein is 7-cyano-7-deazaguanine synthase 1 (queC1) of Sulfurisphaera tokodaii (strain DSM 16993 / JCM 10545 / NBRC 100140 / 7) (Sulfolobus tokodaii).